Here is a 578-residue protein sequence, read N- to C-terminus: MVTLIDSPTSAAVQPRLTLQTADIAAHTTAIRCLDWDRDRFDIEFELRHGTTYNSFLIRGEKTALIDTSHRKFEAVYLQLLQDLVDLRSLDYLIVNHTEPDHSGLIPDLLELAPQVTVVGSKVAIQFLEKLVHRPFESQIVKSGHSLDLGQGHELQFISAPNLHWPDTILTYDSGTQVLYTCDVFGMHYCDDSLFDETPERLEPDFQYYYNCLMGSNARSVLMALKRIAPLQVVLVATGHGPLLQHHISHWLGQYDAWSQNQVKAETFVALFYVDGYGVSDRLVQTIADGISKTGVAIELVDLSVADTHEVRTLAQCAAGLVVGMPPQSSTSTTLDPLLGTILAAVHPKQVIGLFESGGGQDEPIYPLRNRFQELGLQEAFEPILLKTEPTAATDQLCREAGTDLGQYLTQKQSQQANTDLDPELNQAIGRLSTGLYILTAQKGDVRSAMLASWVIQGSFEPLGIVIAVAKDRAIESLLHPGDTFVLNVLEEDNYQSLMRHFLLRFPPGADRFAGVNTYPAQNGSPILLETLAYLECEVTSRLDGNDHWLVYSTIQTGRVAKLNALTATHHRKLGNHY.

The interval 48 to 240 (RHGTTYNSFL…LQVVLVATGH (193 aa)) is zinc metallo-hydrolase. Positions 97, 99, 101, 164, 183, and 240 each coordinate Fe cation. The Flavodoxin-like domain maps to 269–406 (VALFYVDGYG…LCREAGTDLG (138 aa)). The tract at residues 429–578 (IGRLSTGLYI…THHRKLGNHY (150 aa)) is flavodoxin-reductase-like.

The protein in the N-terminal section; belongs to the zinc metallo-hydrolase group 3 family. It in the C-terminal section; belongs to the flavodoxin reductase family. Fe cation is required as a cofactor.

Functionally, mediates electron transfer from NADH to oxygen, reducing it to water. This modular protein has 3 redox cofactors, in other organisms the same activity requires 2 or 3 proteins. The polypeptide is Putative diflavin flavoprotein A 2 (dfa2) (Synechocystis sp. (strain ATCC 27184 / PCC 6803 / Kazusa)).